The sequence spans 116 residues: U30-theraphotoxin-Cg1b (116 aa).

An N-terminal signal peptide occupies residues 1–17 (MKLCVLTIATLLVTATS). Residues 18-53 (LETQKEIAEGNELTREETPSLVEHKEDEAAAASEKR) constitute a propeptide that is removed on maturation. A disordered region spans residues 25–45 (AEGNELTREETPSLVEHKEDE). 4 cysteine pairs are disulfide-bonded: C55–C69, C62–C75, C66–C112, and C68–C88.

The protein belongs to the neurotoxin 03 (Tx2) family. 02 subfamily. As to expression, expressed by the venom gland.

The protein resides in the secreted. Probable ion channel inhibitor. This is U30-theraphotoxin-Cg1b from Chilobrachys guangxiensis (Chinese earth tiger tarantula).